The primary structure comprises 81 residues: MSITIYTRNNCVQCHATKRAMESRGFEFEMVNVDLVPDAADTLRAQGFRQLPVVMAGDLSWSGFRPDMINRLHPTPHAANA.

Residues 1–81 (MSITIYTRNN…LHPTPHAANA (81 aa)) enclose the Glutaredoxin domain. Residues Cys-11 and Cys-14 are joined by a disulfide bond.

This sequence belongs to the glutaredoxin family.

In terms of biological role, electron transport system for the ribonucleotide reductase system NrdEF. This is Glutaredoxin-like protein NrdH (nrdH) from Salmonella typhimurium (strain LT2 / SGSC1412 / ATCC 700720).